A 137-amino-acid polypeptide reads, in one-letter code: Small heat shock protein IbpA (137 aa).

One can recognise a sHSP domain in the interval 28–137 (TQSNGGYPPY…AMKPRRIEIK (110 aa)).

This sequence belongs to the small heat shock protein (HSP20) family. In terms of assembly, monomer. Forms homomultimers of about 100-150 subunits at optimal growth temperatures. Conformation changes to monomers at high temperatures or high ionic concentrations.

The protein localises to the cytoplasm. Associates with aggregated proteins, together with IbpB, to stabilize and protect them from irreversible denaturation and extensive proteolysis during heat shock and oxidative stress. Aggregated proteins bound to the IbpAB complex are more efficiently refolded and reactivated by the ATP-dependent chaperone systems ClpB and DnaK/DnaJ/GrpE. Its activity is ATP-independent. This is Small heat shock protein IbpA from Pectobacterium atrosepticum (strain SCRI 1043 / ATCC BAA-672) (Erwinia carotovora subsp. atroseptica).